A 433-amino-acid chain; its full sequence is MVCLDLSQYRMITDVKNKDNTLILEINKIYEIEVEIPYEEVEIDGSIIKINAHPKRAENIKVGILNLISYSIANNLKSKITKRKTIYINEPIPLIGHTAFGLIERGRNIIQVRGHCGCNLNCIFCSVDEGEFSKTRKNDYYVDLEYLIENYKKIVDFKENKFIEAHLDGQGEPSLYYPLVDLVQELAEINKKGNGIVSMQTNGTVLNYKLIDELEEAGLHRINLSINALDEKMAKMLSGRRDYNIKKILDIAEYIKNSKIHLLIAPLLLPNINDEEFKRVIEYAVDLEQKNPQNIINPLTGKKDPILGCQLCRVYQLGRRPKKMKVWDFEKFYYLLGKYELEYKKKGIEVKLITSPKDFGTHKRKRLPYPFKVGEVTKVKVVLDGRVKGEVLGVAKDRVIQIINCNNEQNLIGKTVKVRILRNKDNIIVAELV.

The 246-residue stretch at 104 to 349 folds into the Radical SAM core domain; that stretch reads ERGRNIIQVR…ELEYKKKGIE (246 aa). Residues cysteine 118, cysteine 122, and cysteine 125 each contribute to the [4Fe-4S] cluster site. S-adenosyl-L-methionine-binding positions include 171 to 172 and 236 to 238; these read GE and MLS. Residues 370-433 enclose the TRAM domain; the sequence is PFKVGEVTKV…KDNIIVAELV (64 aa).

This sequence belongs to the radical SAM superfamily. [4Fe-4S] cluster is required as a cofactor.

This is an uncharacterized protein from Methanocaldococcus jannaschii (strain ATCC 43067 / DSM 2661 / JAL-1 / JCM 10045 / NBRC 100440) (Methanococcus jannaschii).